The chain runs to 349 residues: UPF0283 membrane protein Ent638_2153 (349 aa).

The next 3 membrane-spanning stretches (helical) occupy residues 70-90, 99-119, and 213-233; these read MVTA…VQWT, WVAL…VGSV, and ESTL…FIAW.

It belongs to the UPF0283 family.

The protein localises to the cell inner membrane. In Enterobacter sp. (strain 638), this protein is UPF0283 membrane protein Ent638_2153.